The sequence spans 259 residues: Global transcriptional regulator CodY (259 aa).

Residues 1 to 155 (MELLAKTRKL…SSTVVGMEIL (155 aa)) are GAF domain. A DNA-binding region (H-T-H motif) is located at residues 203–222 (ASKIADRVGITRSVIVNALR). Serine 215 bears the Phosphoserine mark.

It belongs to the CodY family.

The protein localises to the cytoplasm. Functionally, DNA-binding global transcriptional regulator which is involved in the adaptive response to starvation and acts by directly or indirectly controlling the expression of numerous genes in response to nutrient availability. During rapid exponential growth, CodY is highly active and represses genes whose products allow adaptation to nutrient depletion. The chain is Global transcriptional regulator CodY from Bacillus anthracis (strain A0248).